The following is a 399-amino-acid chain: Acetate kinase (399 aa).

A Mg(2+)-binding site is contributed by Asn-9. Lys-16 contacts ATP. Arg-90 contributes to the substrate binding site. The active-site Proton donor/acceptor is the Asp-147. ATP is bound by residues 207–211 (HIGNG), 282–284 (DLR), and 330–334 (GVGEN). Mg(2+) is bound at residue Glu-384.

It belongs to the acetokinase family. Homodimer. The cofactor is Mg(2+). It depends on Mn(2+) as a cofactor.

It is found in the cytoplasm. It carries out the reaction acetate + ATP = acetyl phosphate + ADP. Its pathway is metabolic intermediate biosynthesis; acetyl-CoA biosynthesis; acetyl-CoA from acetate: step 1/2. Its function is as follows. Catalyzes the formation of acetyl phosphate from acetate and ATP. Can also catalyze the reverse reaction. The chain is Acetate kinase from Staphylococcus saprophyticus subsp. saprophyticus (strain ATCC 15305 / DSM 20229 / NCIMB 8711 / NCTC 7292 / S-41).